The chain runs to 152 residues: Transcriptional repressor NrdR (152 aa).

A zinc finger spans residues 3-34; that stretch reads CPFCGHADTQVVDSRVSEDGASIRRRRRCLEC. The 91-residue stretch at 49-139 folds into the ATP-cone domain; that stretch reads PQVVKQDGHR…VYRSFQDVAE (91 aa).

This sequence belongs to the NrdR family. Zn(2+) is required as a cofactor.

In terms of biological role, negatively regulates transcription of bacterial ribonucleotide reductase nrd genes and operons by binding to NrdR-boxes. This is Transcriptional repressor NrdR from Laribacter hongkongensis (strain HLHK9).